We begin with the raw amino-acid sequence, 159 residues long: Nutritionally-regulated adipose and cardiac-enriched protein homolog (159 aa).

Positions Met-1–His-67 are disordered. Basic and acidic residues-rich tracts occupy residues Ser-12–Glu-25 and Ser-50–Arg-63. A helical transmembrane segment spans residues Leu-107 to Ala-124.

Its subcellular location is the cell membrane. This chain is Nutritionally-regulated adipose and cardiac-enriched protein homolog (NRAC), found in Bos taurus (Bovine).